Here is a 1317-residue protein sequence, read N- to C-terminus: Toxin protein Tse5 (1317 aa).

A disordered region spans residues 395–419 (GRETRRRRDGQGRMLEEESPGKARY). Basic and acidic residues predominate over residues 403-415 (DGQGRMLEEESPG).

Toxin secreted by the H1 type VI (H1-T6SS) secretion system that acts on bacterial target cells. The producing bacterium is protected by a cognate immunity protein. In Pseudomonas aeruginosa (strain ATCC 15692 / DSM 22644 / CIP 104116 / JCM 14847 / LMG 12228 / 1C / PRS 101 / PAO1), this protein is Toxin protein Tse5.